Reading from the N-terminus, the 1479-residue chain is Tyrosine-protein kinase BAZ1B (1479 aa).

Residues 20-126 (EPLFTIPHTQ…GEECDFEVGK (107 aa)) form the WAC domain. The disordered stretch occupies residues 146–212 (EAVEKKSDGA…TSLKKGERKW (67 aa)). 2 stretches are compositionally biased toward basic and acidic residues: residues 148–165 (VEKK…DKEN) and 173–195 (LQKK…DRAR). 3 positions are modified to phosphoserine: Ser-152, Ser-158, and Ser-161. The short motif at 207–213 (KGERKWA) is the C motif element. Thr-266 is modified (phosphothreonine). The interval 302–333 (NPSTKRRNTGSPDRKPSKKPKRDSSSLSSPLN) is disordered. Ser-325, Ser-330, Ser-345, Ser-361, and Ser-374 each carry phosphoserine. Disordered stretches follow at residues 376–433 (NNNK…KTPK) and 448–472 (TQKM…HKHL). A compositionally biased stretch (basic residues) spans 381–396 (HSFHIPKKGPAAKKPG). Positions 415-425 (GQKSTGNSKSP) are enriched in polar residues. Positions 454–465 (TPRSSGGVPRSS) are enriched in low complexity. The stretch at 537–587 (ASMSEEQRKEYLKKKRQELKERLREKAKERREREMLERLEKQKRFEDQELG) forms a coiled coil. The DDT domain occupies 605–669 (NTLFGDVALV…LQTLLQDEIA (65 aa)). 3 positions are modified to phosphoserine: Ser-706, Ser-709, and Ser-717. A coiled-coil region spans residues 774 to 809 (SAELWKERLAVLKEENDKKRAEKQKRKEMEARNKEN). Positions 789 to 813 (NDKKRAEKQKRKEMEARNKENGKEE) are disordered. Lys-827 participates in a covalent cross-link: Glycyl lysine isopeptide (Lys-Gly) (interchain with G-Cter in SUMO1); alternate. Residue Lys-827 forms a Glycyl lysine isopeptide (Lys-Gly) (interchain with G-Cter in SUMO2); alternate linkage. Residues Lys-854, Lys-1043, Lys-1089, and Lys-1107 each participate in a glycyl lysine isopeptide (Lys-Gly) (interchain with G-Cter in SUMO2) cross-link. Residues 854–890 (KRKREIQERETKVRLEREAEEERMRKHKAAAEKAFQE) are a coiled coil. A PHD-type zinc finger spans residues 1184-1234 (NARCKVCRKKGEDDKLILCDECNKAFHLFCLRPALYEVPDGEWQCPACQPP). The tract at residues 1231-1324 (CQPPTARRNS…SRPKDDPEVD (94 aa)) is disordered. Positions 1254–1277 (SEGDESGEEEEEEEEEEEEEEDYE) are enriched in acidic residues. A coiled-coil region spans residues 1257 to 1284 (DESGEEEEEEEEEEEEEEDYEVAGLRLR). Basic residues predominate over residues 1305–1316 (PGKKSHPARRSR). Residue Ser-1315 is modified to Phosphoserine. Lys-1331 is subject to N6-acetyllysine. The Bromo domain maps to 1335–1439 (RRQSLELQKC…QCLLALLQKH (105 aa)). Phosphoserine is present on residues Ser-1338, Ser-1464, Ser-1466, and Ser-1468. Residues 1451–1479 (RKFPDRLADDEGDSDSESVGQSRGRRQKK) form a disordered region.

The protein belongs to the WAL family. BAZ1B subfamily. As to quaternary structure, component of the WICH-1 ISWI chromatin remodeling complex, at least composed of SMARCA1 and BAZ1B/WSTF, which regulates the spacing of histone octamers on the DNA template to facilitate access to DNA. Within the WICH-1 ISWI chromatin remodeling complex interacts with SMARCA1; the interaction is direct. Component of the WICH-5 ISWI chromatin remodeling complex (also called the WICH complex), at least composed of SMARCA5/SNF2H and BAZ1B/WSTF, which regulates the spacing of histone octamers on the DNA template to facilitate access to DNA. Within the WICH-5 ISWI chromatin remodeling complex interacts with SMARCA5/SNF2H; the interaction is direct. Component of the B-WICH chromatin remodeling complex, at least composed of SMARCA5/SNF2H, BAZ1B/WSTF, SF3B1, DEK, MYO1C, ERCC6, MYBBP1A and DDX21. Within the B-WICH chromatin remodeling complex, interacts with SMARCA5/SNF2H, DDX21, DEK, MYBBP1A, SF3B1 and ERCC6. Interacts with MYO1C. Interacts with PCNA; the interaction is direct and is required for BAZ1B/WSTF binding to replication foci during S phase. Interacts with CDT1. It depends on Mn(2+) as a cofactor.

The protein localises to the nucleus. The enzyme catalyses L-tyrosyl-[protein] + ATP = O-phospho-L-tyrosyl-[protein] + ADP + H(+). Its function is as follows. Atypical tyrosine-protein kinase that plays a central role in chromatin remodeling and acts as a transcription regulator. Involved in DNA damage response by phosphorylating 'Tyr-142' of histone H2AX (H2AXY142ph). H2AXY142ph plays a central role in DNA repair and acts as a mark that distinguishes between apoptotic and repair responses to genotoxic stress. Regulatory subunit of the ATP-dependent WICH-1 and WICH-5 ISWI chromatin remodeling complexes, which form ordered nucleosome arrays on chromatin and facilitate access to DNA during DNA-templated processes such as DNA replication, transcription, and repair. Both complexes regulate the spacing of nucleosomes along the chromatin and have the ability to slide mononucleosomes to the center of a DNA template. The WICH-1 ISWI chromatin remodeling complex has a lower ATP hydrolysis rate than the WICH-5 ISWI chromatin remodeling complex. The WICH-5 ISWI chromatin remodeling complex regulates the transcription of various genes, has a role in RNA polymerase I transcription. Within the B-WICH complex has a role in RNA polymerase III transcription. Mediates the recruitment of the WICH-5 ISWI chromatin remodeling complex to replication foci during DNA replication. In Mus musculus (Mouse), this protein is Tyrosine-protein kinase BAZ1B (Baz1b).